The chain runs to 385 residues: Multidrug export protein AcrE (385 aa).

The first 23 residues, Met1 to Gly23, serve as a signal peptide directing secretion. Residue Cys24 is the site of N-palmitoyl cysteine attachment. Cys24 carries S-diacylglycerol cysteine lipidation. Residues Ala366 to Lys385 form a disordered region. Positions Lys373–Lys385 are enriched in polar residues.

Belongs to the membrane fusion protein (MFP) (TC 8.A.1) family. In terms of assembly, part of the tripartite efflux system AcrEF-TolC, which is composed of an inner membrane transporter, AcrF, a periplasmic membrane fusion protein, AcrE, and an outer membrane component, TolC. The complex forms a large protein conduit and can translocate molecules across both the inner and outer membranes.

The protein resides in the cell inner membrane. In terms of biological role, part of the tripartite efflux system AcrEF-TolC. Involved in the efflux of indole and organic solvents. This is Multidrug export protein AcrE (acrE) from Escherichia coli (strain K12).